The following is a 156-amino-acid chain: Cytochrome c-type biogenesis protein CcmE 2 (156 aa).

At 1-8 (MNPQRRRR) the chain is on the cytoplasmic side. The helical; Signal-anchor for type II membrane protein transmembrane segment at 9 to 29 (LWLVLALVLAGGLATTLVAMA) threads the bilayer. Over 30–156 (LQRNVAYLYT…AAAGQVGERQ (127 aa)) the chain is Periplasmic. His123 and Tyr127 together coordinate heme. The interval 136–156 (MGSAHRKHDVPAAAGQVGERQ) is disordered.

Belongs to the CcmE/CycJ family.

It localises to the cell inner membrane. In terms of biological role, heme chaperone required for the biogenesis of c-type cytochromes. Transiently binds heme delivered by CcmC and transfers the heme to apo-cytochromes in a process facilitated by CcmF and CcmH. In Xanthomonas axonopodis pv. citri (strain 306), this protein is Cytochrome c-type biogenesis protein CcmE 2.